Reading from the N-terminus, the 878-residue chain is Alanine--tRNA ligase (878 aa).

Positions 567, 571, 669, and 673 each coordinate Zn(2+).

It belongs to the class-II aminoacyl-tRNA synthetase family. Zn(2+) serves as cofactor.

It is found in the cytoplasm. It carries out the reaction tRNA(Ala) + L-alanine + ATP = L-alanyl-tRNA(Ala) + AMP + diphosphate. Catalyzes the attachment of alanine to tRNA(Ala) in a two-step reaction: alanine is first activated by ATP to form Ala-AMP and then transferred to the acceptor end of tRNA(Ala). Also edits incorrectly charged Ser-tRNA(Ala) and Gly-tRNA(Ala) via its editing domain. The polypeptide is Alanine--tRNA ligase (Rickettsia akari (strain Hartford)).